Consider the following 279-residue polypeptide: Phosphatidylglycerol--prolipoprotein diacylglyceryl transferase (279 aa).

Transmembrane regions (helical) follow at residues 22–42, 52–72, and 89–109; these read WYGIIIACGILLGYFIAQAAL, LIDIIFYSAIVGFIVARIYFV, and IWHGGIAIHGGLIGGLISGII. Residue Arg137 participates in a 1,2-diacyl-sn-glycero-3-phospho-(1'-sn-glycerol) binding. The next 2 helical transmembrane spans lie at 203 to 223 and 235 to 255; these read LGETFFGYLIWYSVGRFFVEA and IRVAQLVSVVLILISVIFVIY.

This sequence belongs to the Lgt family.

The protein localises to the cell membrane. The catalysed reaction is L-cysteinyl-[prolipoprotein] + a 1,2-diacyl-sn-glycero-3-phospho-(1'-sn-glycerol) = an S-1,2-diacyl-sn-glyceryl-L-cysteinyl-[prolipoprotein] + sn-glycerol 1-phosphate + H(+). Its pathway is protein modification; lipoprotein biosynthesis (diacylglyceryl transfer). Functionally, catalyzes the transfer of the diacylglyceryl group from phosphatidylglycerol to the sulfhydryl group of the N-terminal cysteine of a prolipoprotein, the first step in the formation of mature lipoproteins. The polypeptide is Phosphatidylglycerol--prolipoprotein diacylglyceryl transferase (Staphylococcus epidermidis (strain ATCC 12228 / FDA PCI 1200)).